The chain runs to 185 residues: Capsid protein (185 aa).

The tract at residues 136–185 (NAPILSTLPETTVVRRRDRGRSPRRRTPSPRRRRSQSPRRRRSQSRESQC) is disordered. Positions 149–178 (VRRRDRGRSPRRRTPSPRRRRSQSPRRRRS) are enriched in basic residues. A phosphoserine; by host mark is found at Ser157, Ser164, and Ser172. The 1; half-length repeat unit spans residues 157-163 (SPRRRTP). The interval 157 to 179 (SPRRRTPSPRRRRSQSPRRRRSQ) is 3 X 8 AA repeats of S-P-R-R-R-[PR]-S-Q. Positions 160-177 (RRTPSPRRRRSQSPRRRR) match the Bipartite nuclear localization signal motif. 2 tandem repeats follow at residues 164–171 (SPRRRRSQ) and 172–179 (SPRRRRSQ). The tract at residues 179–185 (QSRESQC) is RNA binding.

The protein belongs to the orthohepadnavirus core antigen family. Homodimerizes, then multimerizes. Interacts with cytosol exposed regions of viral L glycoprotein present in the reticulum-to-Golgi compartment. Interacts with human FLNB. Phosphorylated form interacts with host importin alpha; this interaction depends on the exposure of the NLS, which itself depends upon genome maturation and/or phosphorylation of the capsid protein. Interacts with host NUP153. Post-translationally, phosphorylated by host SRPK1, SRPK2, and maybe protein kinase C or GAPDH. Phosphorylation is critical for pregenomic RNA packaging. Protein kinase C phosphorylation is stimulated by HBx protein and may play a role in transport of the viral genome to the nucleus at the late step during the viral replication cycle.

The protein resides in the virion. Its subcellular location is the host cytoplasm. In terms of biological role, self assembles to form an icosahedral capsid. Most capsids appear to be large particles with an icosahedral symmetry of T=4 and consist of 240 copies of capsid protein, though a fraction forms smaller T=3 particles consisting of 180 capsid proteins. Entering capsids are transported along microtubules to the nucleus. Phosphorylation of the capsid is thought to induce exposure of nuclear localization signal in the C-terminal portion of the capsid protein that allows binding to the nuclear pore complex via the importin (karyopherin-) alpha and beta. Capsids are imported in intact form through the nuclear pore into the nuclear basket, where it probably binds NUP153. Only capsids that contain the mature viral genome can release the viral DNA and capsid protein into the nucleoplasm. Immature capsids get stuck in the basket. Capsids encapsulate the pre-genomic RNA and the P protein. Pre-genomic RNA is reverse-transcribed into DNA while the capsid is still in the cytoplasm. The capsid can then either be directed to the nucleus, providing more genomes for transcription, or bud through the endoplasmic reticulum to provide new virions. The sequence is that of Capsid protein from Homo sapiens (Human).